The sequence spans 385 residues: Probable caffeine synthase MTL1 (385 aa).

Y18, C62, N67, D101, L102, S140, and F141 together coordinate S-adenosyl-L-homocysteine. The caffeine site is built by Y158, Q161, and F162. N179 provides a ligand contact to Mg(2+). T238 contacts caffeine. 3 residues coordinate Mg(2+): D261, F263, and N264. Position 369 (Y369) interacts with caffeine.

This sequence belongs to the methyltransferase superfamily. Type-7 methyltransferase family. The cofactor is Mg(2+).

Its pathway is alkaloid biosynthesis. Its function is as follows. May be involved in the biosynthesis of caffeine. The protein is Probable caffeine synthase MTL1 of Coffea canephora (Robusta coffee).